Here is a 258-residue protein sequence, read N- to C-terminus: Type III pantothenate kinase (258 aa).

Aspartate 6–valine 13 serves as a coordination point for ATP. Glycine 108–arginine 111 contributes to the substrate binding site. Aspartate 110 serves as the catalytic Proton acceptor. Aspartate 130 is a K(+) binding site. An ATP-binding site is contributed by threonine 133. Residue threonine 185 coordinates substrate.

The protein belongs to the type III pantothenate kinase family. In terms of assembly, homodimer. Requires NH4(+) as cofactor. K(+) serves as cofactor.

It is found in the cytoplasm. The enzyme catalyses (R)-pantothenate + ATP = (R)-4'-phosphopantothenate + ADP + H(+). Its pathway is cofactor biosynthesis; coenzyme A biosynthesis; CoA from (R)-pantothenate: step 1/5. Catalyzes the phosphorylation of pantothenate (Pan), the first step in CoA biosynthesis. The protein is Type III pantothenate kinase of Thermobifida fusca (strain YX).